The following is a 649-amino-acid chain: Sulfate transporter 1.1 (649 aa).

Positions 1-20 are disordered; sequence MSGTINPPDGGGSGARNPPV. Over 1–86 the chain is Cytoplasmic; the sequence is MSGTINPPDG…AREYTLRKFR (86 aa). The helical transmembrane segment at 87–107 threads the bilayer; sequence GDLIAGLTIASLCIPQDIGYA. Residues 108 to 111 lie on the Extracellular side of the membrane; it reads KLAN. Residues 112 to 132 traverse the membrane as a helical segment; sequence VDPKYGLYSSFVPPLIYAGMG. Residues 133–136 lie on the Cytoplasmic side of the membrane; it reads SSRD. The chain crosses the membrane as a helical span at residues 137 to 157; the sequence is IAIGPVAVVSLLVGTLCQAVI. Residues 158-168 are Extracellular-facing; it reads DPKKNPEDYLR. 2 consecutive transmembrane segments (helical) span residues 169–189 and 190–210; these read LVFTATFFAGIFQAGLGFLRL and GFLIDFLSHAAVVGFMGGAAI. The Extracellular portion of the chain corresponds to 211–248; the sequence is TIALQQLKGFLGIKTFTKKTDIVSVMHSVFKNAEHGWN. The helical transmembrane segment at 249 to 269 threads the bilayer; the sequence is WQTIVIGASFLTFLLVTKFIG. Topologically, residues 270–275 are cytoplasmic; it reads KRNRKL. Residues 276–296 traverse the membrane as a helical segment; sequence FWVPAIAPLISVIISTFFVFI. Residues 297–334 are Extracellular-facing; that stretch reads FRADKQGVQIVKHIDQGINPISVHKIFFSGKYFTEGIR. The helical transmembrane segment at 335-355 threads the bilayer; it reads IGGIAGMVALTEAVAIARTFA. Over 356–367 the chain is Cytoplasmic; sequence AMKDYQIDGNKE. Residues 368–388 traverse the membrane as a helical segment; that stretch reads MIALGTMNVVGSMTSCYIATG. The Extracellular segment spans residues 389–404; sequence SFSRSAVNFMAGVETA. A helical transmembrane segment spans residues 405-425; sequence VSNIVMAIVVALTLEFITPLF. The Cytoplasmic segment spans residues 426–431; sequence KYTPNA. A helical membrane pass occupies residues 432-452; that stretch reads ILAAIIISAVLGLIDIDAAIL. Residues 453–465 lie on the Extracellular side of the membrane; sequence IWRIDKLDFLACM. Residues 466-486 traverse the membrane as a helical segment; it reads GAFLGVIFISVEIGLLIAVVI. The Cytoplasmic portion of the chain corresponds to 487-649; that stretch reads SFAKILLQVT…CSTEVAEQQT (163 aa). One can recognise an STAS domain in the interval 517 to 640; sequence QYPDAAQIPG…LTVGDAVAVC (124 aa).

The protein belongs to the SLC26A/SulP transporter (TC 2.A.53) family. Interacts with OASA1 through its STAS domain. In terms of tissue distribution, expressed in lateral root cap, root hairs, epidermal and cortical cells of roots.

It is found in the membrane. Its function is as follows. High-affinity H(+)/sulfate cotransporter that mediates the uptake of the environmental sulfate by plant roots under low-sulfur conditions. Plays a central role in the regulation of sulfate assimilation. In Arabidopsis thaliana (Mouse-ear cress), this protein is Sulfate transporter 1.1 (SULTR1;1).